Consider the following 88-residue polypeptide: Sec-independent protein translocase protein TatA (88 aa).

A helical membrane pass occupies residues 1–21; sequence MGGISITQLLIIASIVVVLFG. The disordered stretch occupies residues 39-88; that stretch reads FKKSMSEDDNTTSTSSDKSSQDADFTAPPIEPKANLACPDEAKNKDKEHV. The span at 49–62 shows a compositional bias: low complexity; it reads TTSTSSDKSSQDAD. The span at 78–88 shows a compositional bias: basic and acidic residues; sequence DEAKNKDKEHV.

The protein belongs to the TatA/E family. The Tat system comprises two distinct complexes: a TatABC complex, containing multiple copies of TatA, TatB and TatC subunits, and a separate TatA complex, containing only TatA subunits. Substrates initially bind to the TatABC complex, which probably triggers association of the separate TatA complex to form the active translocon.

The protein resides in the cell inner membrane. Its function is as follows. Part of the twin-arginine translocation (Tat) system that transports large folded proteins containing a characteristic twin-arginine motif in their signal peptide across membranes. TatA could form the protein-conducting channel of the Tat system. This chain is Sec-independent protein translocase protein TatA, found in Sodalis glossinidius (strain morsitans).